Here is an 868-residue protein sequence, read N- to C-terminus: Metabotropic glutamate receptor 6 (868 aa).

Residues 1–20 form the signal peptide; it reads MARLLLALLAWLAQMSPVRA. Residues 21-576 are Extracellular-facing; that stretch reads AGSVRLAGGL…VVRLTWSSPW (556 aa). A disulfide bond links C48 and C90. L-glutamate is bound by residues S145, 166-168, and Y216; that span reads AST. 7 cysteine pairs are disulfide-bonded: C235/C527, C358/C374, C414/C421, C509/C528, C513/C531, C534/C546, and C549/C562. N287 is a glycosylation site (N-linked (GlcNAc...) asparagine). Residue D298 coordinates L-glutamate. K391 contributes to the L-glutamate binding site. N-linked (GlcNAc...) asparagine glycans are attached at residues N442 and N470. N558 carries N-linked (GlcNAc...) asparagine glycosylation. Residues 577-599 form a helical membrane-spanning segment; sequence AAPPLLLAVLGIMATTTVVGTFV. The Cytoplasmic portion of the chain corresponds to 600-613; that stretch reads RHNNTPIVRASGRE. Residues 614–634 traverse the membrane as a helical segment; it reads LSYVLLTGIFLIYAVTFLMVA. Topologically, residues 635-645 are extracellular; it reads EPGAAVCATRR. Residues 646–664 form a helical membrane-spanning segment; it reads LFLGLGTTLSYSALLTKTN. Residues 665 to 688 are Cytoplasmic-facing; the sequence is RIYRIFEQGKRSVTPPPFISPTSQ. The helical transmembrane segment at 689–709 threads the bilayer; that stretch reads LVITFSLTSLQVVGVIAWLGA. Over 710-739 the chain is Extracellular; it reads QPPHSVIDYEEQRTVDPEQARGVLKCDMSD. A helical membrane pass occupies residues 740–761; it reads LSLIGCLGYSLLLMVTCTVYAI. At 762–774 the chain is on the cytoplasmic side; it reads KARGVPETFNEAK. Residues 775 to 797 form a helical membrane-spanning segment; the sequence is PIGFTMYTTCIVWLAFVPIFFGT. Over 798–810 the chain is Extracellular; the sequence is AQSAEKIYIQTTT. The helical transmembrane segment at 811-836 threads the bilayer; it reads LTVSLSLSASVSLGMLYVPKTYVILF. The Cytoplasmic segment spans residues 837-868; that stretch reads HPEQNVQKRKRSLKTTSTVAAPPKGADTEDPK. The disordered stretch occupies residues 845–868; it reads RKRSLKTTSTVAAPPKGADTEDPK.

It belongs to the G-protein coupled receptor 3 family. As to quaternary structure, homodimer. Interacts with GPR179. Interacts with photoreceptor synaptic protein LRIT1 (via its N-terminal extracellular domain).

It localises to the cell membrane. Its subcellular location is the endoplasmic reticulum membrane. The protein localises to the golgi apparatus membrane. It is found in the cell projection. The protein resides in the dendrite. Functionally, G-protein coupled receptor for glutamate. Ligand binding causes a conformation change that triggers signaling via guanine nucleotide-binding proteins (G proteins) and modulates the activity of down-stream effectors, such as adenylate cyclase. Signaling inhibits adenylate cyclase activity. Signaling stimulates TRPM1 channel activity and Ca(2+) uptake. Required for normal vision. This is Metabotropic glutamate receptor 6 (GRM6) from Oryctolagus cuniculus (Rabbit).